Here is a 117-residue protein sequence, read N- to C-terminus: uncharacterized protein (117 aa).

The signal sequence occupies residues 1–18 (MKFFWVSSLLGLLGLSTA). Asn-86 carries N-linked (GlcNAc...) asparagine glycosylation.

This is an uncharacterized protein from Schizosaccharomyces pombe (strain 972 / ATCC 24843) (Fission yeast).